The chain runs to 238 residues: Purine nucleoside phosphorylase DeoD-type (238 aa).

Residue histidine 5 participates in a purine D-ribonucleoside binding. Phosphate is bound by residues glycine 21, arginine 25, arginine 44, and 88 to 91 (RIGS). A purine D-ribonucleoside-binding positions include 180 to 182 (EME) and 204 to 205 (SD). Aspartate 205 (proton donor) is an active-site residue.

The protein belongs to the PNP/UDP phosphorylase family. In terms of assembly, homohexamer; trimer of homodimers.

It carries out the reaction a purine D-ribonucleoside + phosphate = a purine nucleobase + alpha-D-ribose 1-phosphate. The catalysed reaction is a purine 2'-deoxy-D-ribonucleoside + phosphate = a purine nucleobase + 2-deoxy-alpha-D-ribose 1-phosphate. Functionally, catalyzes the reversible phosphorolytic breakdown of the N-glycosidic bond in the beta-(deoxy)ribonucleoside molecules, with the formation of the corresponding free purine bases and pentose-1-phosphate. The chain is Purine nucleoside phosphorylase DeoD-type from Xenorhabdus nematophila (strain ATCC 19061 / DSM 3370 / CCUG 14189 / LMG 1036 / NCIMB 9965 / AN6).